Consider the following 294-residue polypeptide: Large ribosomal subunit protein uL2c (294 aa).

The disordered stretch occupies residues 224 to 249 (VMNPVDHPHGGGGEGKSPIGRSRPVT).

It belongs to the universal ribosomal protein uL2 family. As to quaternary structure, part of the 50S ribosomal subunit.

The protein resides in the plastid. It is found in the chloroplast. The chain is Large ribosomal subunit protein uL2c (rpl2) from Porphyra purpurea (Red seaweed).